We begin with the raw amino-acid sequence, 120 residues long: Succinate dehydrogenase membrane anchor subunit (120 aa).

Residues Met1–His17 lie on the Mitochondrial matrix side of the membrane. A helical transmembrane segment spans residues Trp18–Asp38. Topologically, residues Val39–Ser63 are mitochondrial intermembrane. The chain crosses the membrane as a helical span at residues Ile64 to Ile85. A heme-binding site is contributed by His76. The Mitochondrial matrix segment spans residues Glu86–Arg95. Residue Tyr88 coordinates a ubiquinone. Residues Ile96 to Phe120 traverse the membrane as a helical segment.

Part of an enzyme complex containing four subunits: a flavoprotein, an iron-sulfur protein, plus two membrane-anchoring proteins. The cofactor is heme.

It localises to the mitochondrion inner membrane. It functions in the pathway carbohydrate metabolism; tricarboxylic acid cycle. Its function is as follows. Membrane-anchoring subunit of succinate dehydrogenase (SDH). The protein is Succinate dehydrogenase membrane anchor subunit (SDH4) of Reclinomonas americana.